We begin with the raw amino-acid sequence, 158 residues long: Transcription elongation factor GreA (158 aa).

It belongs to the GreA/GreB family.

Its function is as follows. Necessary for efficient RNA polymerase transcription elongation past template-encoded arresting sites. The arresting sites in DNA have the property of trapping a certain fraction of elongating RNA polymerases that pass through, resulting in locked ternary complexes. Cleavage of the nascent transcript by cleavage factors such as GreA or GreB allows the resumption of elongation from the new 3'terminus. GreA releases sequences of 2 to 3 nucleotides. The polypeptide is Transcription elongation factor GreA (Polaromonas naphthalenivorans (strain CJ2)).